A 528-amino-acid polypeptide reads, in one-letter code: PH domain-containing protein DDB_G0267786 (528 aa).

A PH domain is found at Ser59–Arg180.

The chain is PH domain-containing protein DDB_G0267786 from Dictyostelium discoideum (Social amoeba).